Consider the following 321-residue polypeptide: Major immediate early protein (321 aa).

The RING-type zinc-finger motif lies at cysteine 86 to asparagine 139. The interval leucine 228 to leucine 249 is leucine-zipper.

The protein localises to the host nucleus. Its function is as follows. Plays some regulatory role in both viral DNA replication and transcriptional transactivation. The chain is Major immediate early protein (PE38) from Lepidoptera (butterflies and moths).